The primary structure comprises 481 residues: Phosphoenolpyruvate phosphatase (481 aa).

Residues 1 to 36 (MPIYTSRSCFYLLLFHIILLCSVDKTLCRQTSSFVR) form the signal peptide. Residue asparagine 109 is glycosylated (N-linked (GlcNAc...) asparagine). Fe cation contacts are provided by aspartate 168, aspartate 195, and tyrosine 198. Aspartate 195 is a Zn(2+) binding site. A glycan (N-linked (GlcNAc...) asparagine) is linked at asparagine 206. Zn(2+)-binding residues include asparagine 232 and histidine 317. Asparagine 232 lines the substrate pocket. The active-site Proton donor is the histidine 327. Histidine 354 is a binding site for Zn(2+). 354-356 (HVH) lines the substrate pocket. Histidine 356 serves as a coordination point for Fe cation. N-linked (GlcNAc...) asparagine glycosylation is found at asparagine 370 and asparagine 427.

It belongs to the metallophosphoesterase superfamily. Purple acid phosphatase family.

The protein resides in the vacuole lumen. The enzyme catalyses phosphoenolpyruvate + H2O = pyruvate + phosphate. Functionally, phosphoenolpyruvate phosphatase that probably operates in the vacuole to release phosphate from phosphoenolpyruvate (PEP) under phosphorus starvation. The sequence is that of Phosphoenolpyruvate phosphatase (ACPEPP) from Allium cepa (Onion).